Consider the following 2591-residue polypeptide: Eukaryotic translation initiation factor 2-alpha kinase PK4 (2591 aa).

Residues 1–16 (MYNKGINICLNEDNKC) are Cytoplasmic-facing. The chain crosses the membrane as a helical span at residues 17–37 (IILLHIIFNKCIVSFVASHIL). Over 38-1488 (VEGKICFLNR…EFSSQKHKKS (1451 aa)) the chain is Lumenal. The segment at 1028-1048 (KKKRNSKKGENRNKKRKTQKR) is disordered. The chain crosses the membrane as a helical span at residues 1489–1509 (WYWNIFYAITLVIVIPFIFIY). Residues 1510–2591 (RLFKKQTNNK…NIINGNEVDH (1082 aa)) lie on the Cytoplasmic side of the membrane. The segment at 1781–1840 (NLNSADEENKSPYAKKYSDEKKNRSKSSKYIENTQSNNNDNTNGNMNVGNHINNDKMNNK) is disordered. Residues 1813–1832 (NTQSNNNDNTNGNMNVGNHI) show a composition bias toward low complexity. Residues 1880 to 1888 (IGQGGFGSV) and Lys1905 each bind ATP. Disordered regions lie at residues 2123–2157 (DNDESNGSGHSKKNDNDERKSLNNQNGIYNTGGDI) and 2183–2212 (IKNTQGTSINGTINRNTISDETGTQGTNNN). Positions 2134–2143 (KKNDNDERKS) are enriched in basic and acidic residues. The region spanning 2181–2532 (MTIKNTQGTS…KIKVLLDPHL (352 aa)) is the Protein kinase domain. Asp2369 serves as the catalytic Proton acceptor. Thr2436 is subject to Phosphothreonine; by autocatalysis. Residues 2558 to 2574 (STNPNGDIKENVNQNNL) show a composition bias toward polar residues. The tract at residues 2558–2591 (STNPNGDIKENVNQNNLVDDKGNNNIINGNEVDH) is disordered. Residues 2580-2591 (NNNIINGNEVDH) show a composition bias toward low complexity.

It belongs to the protein kinase superfamily. Ser/Thr protein kinase family. GCN2 subfamily. In terms of assembly, may form oligomers in response to stress; oligomerization may result in catalytic activity. Interacts with BIP; the interaction is disrupted in response to stress.

The protein localises to the endoplasmic reticulum membrane. It catalyses the reaction L-seryl-[protein] + ATP = O-phospho-L-seryl-[protein] + ADP + H(+). The enzyme catalyses L-threonyl-[protein] + ATP = O-phospho-L-threonyl-[protein] + ADP + H(+). With respect to regulation, dissociation from BIP and oligomerization, may results autophosphorylation and kinase activity induction. Functionally, during the asexual blood stage, phosphorylates translation factor eIF2alpha in late schizonts resulting in protein translation inhibition. Plays a role in trophozoite differentiation into schizonts. This is Eukaryotic translation initiation factor 2-alpha kinase PK4 from Plasmodium berghei (strain Anka).